The following is a 495-amino-acid chain: MRAHEYALDDDIVAIATALSPAALGIVRTSGSSSIERVASFFSRAQALTRARAHTFLHGWILDGKTRVDEVVLLVYRAPHSFTGEHAVEIICHGGVRTVQAVYRLCLAQGFRAAQRGEFSFRSFFHGKRDLTRIEAIQSLVDARTCAAQQQAVLHLSGALQQEIAALTRALLAFSATLQGEIEYPEDEETRVHDIDMRELEPLVERLRRLRACWQERALQRTGVRIVLGGCPNAGKSSLFNALLGQDRAIVSSVPGTTRDWLEADLDLSGIPVRLCDTAGLRVTDNPIEAQGVVRSEQLLQGADCVFYIINGRAGVQAADCAFLSDCAVPLVVVVTHNDLMSMSERIQVCQAVQPFISAPVLSCARSQDARGAGEQCLAGGKNGEVRDRAPRAFVCVSAKTHAGLDALRAQTLHLLHGGQVPYEELSLGSERQYVLVDAAVQALEHAQEAYARGFGLDAVVHDLEEALYHCGALTGEVHSEDILDALFEKLCVGK.

3 residues coordinate (6S)-5-formyl-5,6,7,8-tetrahydrofolate: R28, E89, and K128. In terms of domain architecture, TrmE-type G spans 223–417 (GVRIVLGGCP…LRAQTLHLLH (195 aa)). N233 serves as a coordination point for K(+). Residues 233 to 238 (NAGKSS), 252 to 258 (SSVPGTT), and 277 to 280 (DTAG) each bind GTP. Residue S237 participates in Mg(2+) binding. Positions 252, 254, and 257 each coordinate K(+). T258 contributes to the Mg(2+) binding site. K495 contributes to the (6S)-5-formyl-5,6,7,8-tetrahydrofolate binding site.

This sequence belongs to the TRAFAC class TrmE-Era-EngA-EngB-Septin-like GTPase superfamily. TrmE GTPase family. In terms of assembly, homodimer. Heterotetramer of two MnmE and two MnmG subunits. The cofactor is K(+).

The protein localises to the cytoplasm. Its function is as follows. Exhibits a very high intrinsic GTPase hydrolysis rate. Involved in the addition of a carboxymethylaminomethyl (cmnm) group at the wobble position (U34) of certain tRNAs, forming tRNA-cmnm(5)s(2)U34. The protein is tRNA modification GTPase MnmE of Treponema pallidum (strain Nichols).